The primary structure comprises 617 residues: Chaperone protein HscA homolog (617 aa).

Positions 1–23 are disordered; the sequence is MALLQIAEPGQSSAPHEHKRAAG.

This sequence belongs to the heat shock protein 70 family.

Chaperone involved in the maturation of iron-sulfur cluster-containing proteins. Has a low intrinsic ATPase activity which is markedly stimulated by HscB. This chain is Chaperone protein HscA homolog, found in Vibrio vulnificus (strain YJ016).